The chain runs to 278 residues: Tryptophan 2,3-dioxygenase (278 aa).

Substrate is bound by residues 47–51 (FIIQH), Tyr-110, and Arg-114. Residue His-236 coordinates heme. Thr-250 serves as a coordination point for substrate.

This sequence belongs to the tryptophan 2,3-dioxygenase family. As to quaternary structure, homotetramer. Requires heme as cofactor.

It catalyses the reaction L-tryptophan + O2 = N-formyl-L-kynurenine. It participates in amino-acid degradation; L-tryptophan degradation via kynurenine pathway; L-kynurenine from L-tryptophan: step 1/2. Functionally, heme-dependent dioxygenase that catalyzes the oxidative cleavage of the L-tryptophan (L-Trp) pyrrole ring and converts L-tryptophan to N-formyl-L-kynurenine. Catalyzes the oxidative cleavage of the indole moiety. This chain is Tryptophan 2,3-dioxygenase, found in Ruegeria pomeroyi (strain ATCC 700808 / DSM 15171 / DSS-3) (Silicibacter pomeroyi).